The primary structure comprises 207 residues: Low-molecular weight cobalt-containing nitrile hydratase subunit alpha (207 aa).

Residues cysteine 109, cysteine 112, serine 113, and cysteine 114 each contribute to the Co(3+) site.

Belongs to the nitrile hydratase subunit alpha family. As to quaternary structure, heterodimer of an alpha and a beta chain. The cofactor is Co(3+).

The enzyme catalyses an aliphatic primary amide = an aliphatic nitrile + H2O. In terms of biological role, NHase catalyzes the hydration of various nitrile compounds to the corresponding amides. This chain is Low-molecular weight cobalt-containing nitrile hydratase subunit alpha, found in Rhodococcus rhodochrous.